The following is a 398-amino-acid chain: uncharacterized protein (398 aa).

The protein belongs to the class-V pyridoxal-phosphate-dependent aminotransferase family. In terms of assembly, homodimer.

Is essential for optimal growth. This is an uncharacterized protein from Mycobacterium tuberculosis (strain CDC 1551 / Oshkosh).